Consider the following 668-residue polypeptide: Ankyrin repeat domain-containing protein OPG023 (668 aa).

ANK repeat units follow at residues phenylalanine 31–lysine 64, asparagine 101–valine 131, lysine 135–tyrosine 166, tyrosine 199–serine 231, asparagine 235–tyrosine 266, arginine 277–isoleucine 311, asparagine 334–lysine 368, arginine 458–isoleucine 487, and asparagine 491–cysteine 521. Residues glycine 586 to glutamate 666 form a PRANC/F-box-like region.

It belongs to the orthopoxvirus OPG023 family. Interacts (via N-terminus) with host RELA. Interacts (via PRANC/F-box-like domain) with the SKP1 component of the host SCF ubiquitin ligase complex.

Its function is as follows. Substrate-specific adapter of SKP1-containing E3 ubiquitin-protein ligases which mediate the ubiquitination and subsequent proteasomal degradation of host target proteins. Prevents activation and subsequent nuclear localization of NF-kappa-B in infected cells, by targeting NF-kappa-B RELA subunit to the SCF E3 ligase complex. This is Ankyrin repeat domain-containing protein OPG023 (OPG023) from Bos taurus (Bovine).